We begin with the raw amino-acid sequence, 552 residues long: Gamma-aminobutyric acid receptor subunit alpha-4 (552 aa).

The N-terminal stretch at 1-35 is a signal peptide; sequence MVSVQKVPAIVLCSGVSLALLHVLCLATCLNESPG. The Extracellular portion of the chain corresponds to 36–259; that stretch reads QNSKDEKLCP…FHLRRKMGYF (224 aa). Residue Asn-47 is glycosylated (N-linked (GlcNAc...) asparagine). Arg-100 contacts 4-aminobutanoate. 2 N-linked (GlcNAc...) asparagine glycosylation sites follow: Asn-144 and Asn-157. Thr-163 is a binding site for 4-aminobutanoate. A disulfide bond links Cys-172 and Cys-186. Residues 260–280 form a helical membrane-spanning segment; that stretch reads MIQTYIPCIMTVILSQVSFWI. Over 281-284 the chain is Cytoplasmic; it reads NKES. The chain crosses the membrane as a helical span at residues 285 to 305; the sequence is VPARTVFGITTVLTMTTLSIS. Residues 306–318 lie on the Extracellular side of the membrane; sequence ARHSLPKVSYATA. Residues 319–341 traverse the membrane as a helical segment; the sequence is MDWFIAVCFAFVFSALIEFAAVN. Topologically, residues 342–515 are cytoplasmic; sequence YFTNIQMQKA…PPPSGSGTSK (174 aa). Disordered stretches follow at residues 353 to 436, 448 to 470, and 486 to 513; these read KKIS…NPFS, ARGL…PLRS, and TTVN…GSGT. Polar residues predominate over residues 403-423; it reads RTEVGNHSSKTTAAQESSETT. 2 stretches are compositionally biased toward low complexity: residues 448-458 and 486-499; these read ARGLSSAASPS and TTVN…NVSA. The segment covering 500–509 has biased composition (pro residues); it reads TPPPSAPPPS. Residues 516-538 traverse the membrane as a helical segment; that stretch reads IDKYARILFPVTFGAFNMVYWVV. At 539–552 the chain is on the extracellular side; that stretch reads YLSKDTMEKSESLM.

This sequence belongs to the ligand-gated ion channel (TC 1.A.9) family. Gamma-aminobutyric acid receptor (TC 1.A.9.5) subfamily. GABRA4 sub-subfamily. Heteropentamer, formed by a combination of alpha (GABRA1-6), beta (GABRB1-3), gamma (GABRG1-3), delta (GABRD), epsilon (GABRE), rho (GABRR1-3), pi (GABRP) and theta (GABRQ) chains, each subunit exhibiting distinct physiological and pharmacological properties. In terms of tissue distribution, expressed in the brain.

The protein localises to the cell membrane. It localises to the postsynaptic cell membrane. Its activity is regulated as follows. Potentiated by histamine. In terms of biological role, alpha subunit of the heteropentameric ligand-gated chloride channel gated by gamma-aminobutyric acid (GABA), a major inhibitory neurotransmitter in the brain. GABA-gated chloride channels, also named GABA(A) receptors (GABAAR), consist of five subunits arranged around a central pore and contain GABA active binding site(s) located at the alpha and beta subunit interface(s). Alpha-4/GABRA4 subunit often assembles with delta or gamma-2 subunits, in combination with beta subunits. When activated by GABA, GABAARs selectively allow the flow of chloride anions across the cell membrane down their electrochemical gradient. GABAARs containing alpha-4 are predominantly extrasynaptic, contributing to tonic inhibition in dentate granule cells and thalamic relay neurons. Extrasynaptic alpha-4-containing GABAARs control levels of excitability and network activity. GABAAR containing alpha-4-beta-3-delta subunits can simultaneously bind GABA and histamine where histamine binds at the interface of two neighboring beta subunits, which may be involved in the regulation of sleep and wakefulness. The protein is Gamma-aminobutyric acid receptor subunit alpha-4 of Rattus norvegicus (Rat).